A 26-amino-acid polypeptide reads, in one-letter code: AMP deaminase 1 (26 aa).

The protein belongs to the metallo-dependent hydrolases superfamily. Adenosine and AMP deaminases family. In terms of assembly, homotetramer. Requires Zn(2+) as cofactor.

It catalyses the reaction AMP + H2O + H(+) = IMP + NH4(+). The protein operates within purine metabolism; IMP biosynthesis via salvage pathway; IMP from AMP: step 1/1. Functionally, AMP deaminase plays a critical role in energy metabolism. The sequence is that of AMP deaminase 1 (AMPD1) from Oryctolagus cuniculus (Rabbit).